The chain runs to 248 residues: Granzyme E (248 aa).

An N-terminal signal peptide occupies residues 1 to 18 (MPPVLILLTLLLPLGAGA). Positions 19–20 (EE) are excised as a propeptide. Residues 21-246 (IIGGHVVKPH…FLPWISRNMK (226 aa)) form the Peptidase S1 domain. Cysteine 50 and cysteine 66 form a disulfide bridge. Histidine 65 functions as the Charge relay system in the catalytic mechanism. N-linked (GlcNAc...) asparagine glycosylation is found at asparagine 68 and asparagine 102. Aspartate 109 functions as the Charge relay system in the catalytic mechanism. Disulfide bonds link cysteine 143/cysteine 210 and cysteine 175/cysteine 189. An N-linked (GlcNAc...) asparagine glycan is attached at asparagine 154. Serine 204 functions as the Charge relay system in the catalytic mechanism. N-linked (GlcNAc...) asparagine glycosylation is present at asparagine 223.

The protein belongs to the peptidase S1 family. Granzyme subfamily.

The protein resides in the cytolytic granule. Functionally, this enzyme is probably necessary for target cell lysis in cell-mediated immune responses. This is Granzyme E (Gzme) from Mus musculus (Mouse).